Consider the following 477-residue polypeptide: Probable periplasmic serine endoprotease DegP-like (477 aa).

The N-terminal stretch at M1 to A27 is a signal peptide. Residues H117, D147, and S220 each act as charge relay system in the active site. Residues G218–S220 and L275–I279 each bind substrate. PDZ domains follow at residues L264–G355 and D361–G466.

This sequence belongs to the peptidase S1C family.

Its subcellular location is the periplasm. It catalyses the reaction Acts on substrates that are at least partially unfolded. The cleavage site P1 residue is normally between a pair of hydrophobic residues, such as Val-|-Val.. Functionally, might be efficient in the degradation of transiently denatured and unfolded proteins which accumulate in the periplasm following stress conditions. The chain is Probable periplasmic serine endoprotease DegP-like from Pseudomonas putida (strain ATCC 700007 / DSM 6899 / JCM 31910 / BCRC 17059 / LMG 24140 / F1).